Here is a 368-residue protein sequence, read N- to C-terminus: DNA replication and repair protein RecF (368 aa).

Position 30–37 (G30–T37) interacts with ATP.

Belongs to the RecF family.

It localises to the cytoplasm. Its function is as follows. The RecF protein is involved in DNA metabolism; it is required for DNA replication and normal SOS inducibility. RecF binds preferentially to single-stranded, linear DNA. It also seems to bind ATP. The chain is DNA replication and repair protein RecF from Marinomonas sp. (strain MWYL1).